The chain runs to 277 residues: Reaction center protein L chain (277 aa).

3 helical membrane-spanning segments follow: residues 30–52 (FYVG…LIAW), 84–106 (GGIW…LREV), and 113–135 (GIGF…LVVI). Positions 154 and 174 each coordinate (7R,8Z)-bacteriochlorophyll b. The chain crosses the membrane as a helical span at residues 173–195 (AHMIAITFFFTTCLALALHGGLV). His-191 contributes to the Fe cation binding site. Phe-217 is an a ubiquinone binding site. Fe cation is bound at residue His-231. A helical membrane pass occupies residues 233–255 (LGLFLALSAVFFSAVCMIISGPV).

It belongs to the reaction center PufL/M/PsbA/D family. In terms of assembly, reaction center is composed of four bacteriochlorophylls, two bacteriopheophytins, two ubiquinones, one iron, and three highly hydrophobic polypeptide chains (designated L, M, and H).

The protein resides in the cellular chromatophore membrane. In terms of biological role, the reaction center is a membrane-bound complex that mediates the initial photochemical event in the electron transfer process of photosynthesis. The polypeptide is Reaction center protein L chain (pufL) (Rhodopseudomonas palustris (strain ATCC BAA-98 / CGA009)).